Reading from the N-terminus, the 131-residue chain is Holo-[acyl-carrier-protein] synthase (131 aa).

Aspartate 6 and glutamate 55 together coordinate Mg(2+).

This sequence belongs to the P-Pant transferase superfamily. AcpS family. It depends on Mg(2+) as a cofactor.

Its subcellular location is the cytoplasm. The enzyme catalyses apo-[ACP] + CoA = holo-[ACP] + adenosine 3',5'-bisphosphate + H(+). Its function is as follows. Transfers the 4'-phosphopantetheine moiety from coenzyme A to a Ser of acyl-carrier-protein. This is Holo-[acyl-carrier-protein] synthase from Verminephrobacter eiseniae (strain EF01-2).